A 332-amino-acid chain; its full sequence is Divalent cation transporter CmaX (332 aa).

Over 1–277 (MQAYESGDER…MNRTMYLLGI (277 aa)) the chain is Cytoplasmic. A helical membrane pass occupies residues 278–286 (ITGFFLPMS). The Periplasmic segment spans residues 287–307 (FVTGLLGINVGGIPGADAPHG). The chain crosses the membrane as a helical span at residues 308 to 323 (FWLACLLIGGVATFQW). Topologically, residues 324-332 (WVFRRLRWL) are cytoplasmic.

It belongs to the CorA metal ion transporter (MIT) (TC 1.A.35) family. Homopentamer.

The protein localises to the cell inner membrane. It carries out the reaction Zn(2+)(in) = Zn(2+)(out). The catalysed reaction is Cd(2+)(in) = Cd(2+)(out). It catalyses the reaction Ni(2+)(in) = Ni(2+)(out). The enzyme catalyses Co(2+)(in) = Co(2+)(out). Functionally, transports divalent cations including Zn(2+), Cd(2+), Ni(2+) and Co(2+). The proton gradient has a small influence on transport suggesting that the transport is probably not proton-dependent. The chain is Divalent cation transporter CmaX from Pseudomonas aeruginosa (strain ATCC 15692 / DSM 22644 / CIP 104116 / JCM 14847 / LMG 12228 / 1C / PRS 101 / PAO1).